The following is a 1203-amino-acid chain: Protein patched homolog 2 (1203 aa).

The Cytoplasmic segment spans residues 1 to 57; it reads MTRSPPLRELPPSYTPPARTAAPQILAGSLKAPLWLRAYFQGLLFSLGCGIQRHCGK. The chain crosses the membrane as a helical span at residues 58 to 78; sequence VLFLGLLAFGALALGLRMAII. Residues 79 to 392 lie on the Extracellular side of the membrane; sequence ETNLEQLWVE…LDDILHAFSE (314 aa). The N-linked (GlcNAc...) asparagine glycan is linked to N370. A helical membrane pass occupies residues 393–413; that stretch reads VSAARVVGGYLLMLAYACVTM. Positions 394–552 constitute an SSD domain; the sequence is SAARVVGGYL…MLVFPAILSL (159 aa). The Cytoplasmic segment spans residues 414–428; the sequence is LRWDCAQSQGSVGLA. Residues 429–449 traverse the membrane as a helical segment; sequence GVLLVALAVASGLGLCALLGI. The Extracellular segment spans residues 450-457; that stretch reads TFNAATTQ. The chain crosses the membrane as a helical span at residues 458 to 478; it reads VLPFLALGIGVDDVFLLAHAF. Topologically, residues 479–501 are cytoplasmic; the sequence is TEALPGTPLQERMGECLQRTGTS. Residues 502-522 traverse the membrane as a helical segment; sequence VVLTSINNMAAFLMAALVPIP. Over 523-531 the chain is Extracellular; the sequence is ALRAFSLQA. Residues 532–552 traverse the membrane as a helical segment; it reads AIVVGCTFVAVMLVFPAILSL. Residues 553–686 are Cytoplasmic-facing; it reads DLRRRHCQRL…APLLLQSHAK (134 aa). Residues 687–707 traverse the membrane as a helical segment; the sequence is AIVLVLFGALLGLSLYGATLV. The Extracellular segment spans residues 708 to 963; that stretch reads QDGLALTDVV…WEQYLGLRRC (256 aa). N812 carries an N-linked (GlcNAc...) asparagine glycan. A helical transmembrane segment spans residues 964–984; that stretch reads FLLAVCILLVCTFLVCALLLL. The Cytoplasmic segment spans residues 985–991; the sequence is NPWTAGL. A helical transmembrane segment spans residues 992–1012; it reads IVLVLAMMTVELFGIMGFLGI. Residue K1013 is a topological domain, extracellular. Residues 1014 to 1034 traverse the membrane as a helical segment; that stretch reads LSAIPVVILVASVGIGVEFTV. The Cytoplasmic segment spans residues 1035 to 1064; it reads HVALGFLTTQGSRNLRAAHALEHTFAPVTD. Residues 1065–1085 form a helical membrane-spanning segment; it reads GAISTLLGLLMLAGSHFDFIV. At 1086-1093 the chain is on the extracellular side; the sequence is RYFFAALT. The helical transmembrane segment at 1094-1114 threads the bilayer; sequence VLTLLGLLHGLVLLPVLLSIL. Topologically, residues 1115–1203 are cytoplasmic; the sequence is GPPPEVIQMY…SSRGPGPATG (89 aa). The interval 1171–1203 is disordered; sequence GAYIHPAPDEPPWSPAATSSGNLSSRGPGPATG. Residues 1186 to 1195 show a composition bias toward polar residues; the sequence is AATSSGNLSS.

The protein belongs to the patched family.

The protein resides in the membrane. Plays a role in the control of cellular growth. May have a role in epidermal development. May act as a receptor for Sonic hedgehog (SHH). The polypeptide is Protein patched homolog 2 (PTCH2) (Homo sapiens (Human)).